A 390-amino-acid chain; its full sequence is Probable protein phosphatase 2C 30 (390 aa).

The segment covering 1-10 has biased composition (polar residues); the sequence is MQLSKNPIKQ. 2 disordered regions span residues 1 to 20 and 40 to 85; these read MQLSKNPIKQTRNREKNYTD and PPLV…DSET. Positions 44-61 are enriched in low complexity; sequence FSPTSVKTPLSSPRSSPP. One can recognise a PPM-type phosphatase domain in the interval 128–385; the sequence is YYSVYCKRGR…DDISLIIIQL (258 aa). Residues D166, G167, D331, and D376 each contribute to the Mn(2+) site.

It belongs to the PP2C family. Mg(2+) serves as cofactor. Mn(2+) is required as a cofactor.

The catalysed reaction is O-phospho-L-seryl-[protein] + H2O = L-seryl-[protein] + phosphate. It catalyses the reaction O-phospho-L-threonyl-[protein] + H2O = L-threonyl-[protein] + phosphate. This Arabidopsis thaliana (Mouse-ear cress) protein is Probable protein phosphatase 2C 30 (PP2C5).